Reading from the N-terminus, the 151-residue chain is Large ribosomal subunit protein bL17 (151 aa).

The segment at E118–D151 is disordered. Positions P131–A144 are enriched in low complexity.

It belongs to the bacterial ribosomal protein bL17 family. As to quaternary structure, part of the 50S ribosomal subunit. Contacts protein L32.

The sequence is that of Large ribosomal subunit protein bL17 from Syntrophobacter fumaroxidans (strain DSM 10017 / MPOB).